Reading from the N-terminus, the 1087-residue chain is Period circadian protein (1087 aa).

Positions 1–14 (MEGESTESTHNTKV) are enriched in polar residues. 2 disordered regions span residues 1–98 (MEGE…EQTE) and 123–153 (GAPT…QAEQ). The span at 15–46 (SDSAYSNSCSNSQSQRSGSSKSRLSGSHSSGS) shows a compositional bias: low complexity. The Nuclear localization signal signature appears at 65-78 (KRNKDKSRKKKKAK). Basic residues predominate over residues 65 to 78 (KRNKDKSRKKKKAK). Over residues 79–93 (SPAQATAATTTTIKS) the composition is skewed to low complexity. Over residues 129–140 (DAHDAHGDKPQL) the composition is skewed to basic and acidic residues. Positions 141-150 (DVDEQQDDPQ) are enriched in acidic residues. 2 consecutive PAS domains span residues 220–355 (DSFC…ATPI) and 373–479 (FAIQ…RVFQ). Disordered stretches follow at residues 613-692 (PVTA…NPLP), 736-759 (MPEY…WEGD), 871-893 (SSAS…QPEA), and 956-1087 (TTTQ…HGDG). Positions 655–664 (NLTTASNVRM) are enriched in polar residues. Residues 665–689 (SSVTNTSNTGTGTSGGENSASGSSN) show a composition bias toward low complexity. Polar residues-rich tracts occupy residues 877–892 (QHSP…SQPE) and 1003–1024 (LPST…NNPK). Residues 1028-1047 (DSNGNSDDMDGSSFSSFYSS) show a composition bias toward low complexity. Residues 1060 to 1087 (DNEKETKVHKLKPIVEHPEEDQTQHGDG) show a composition bias toward basic and acidic residues.

Forms a heterodimer with timeless (TIM); the complex then translocates into the nucleus. Phosphorylated with a circadian rhythmicity, probably by the double-time protein (dbt). Phosphorylation could be implicated in the stability of per monomer and in the formation of heterodimer per-tim.

It is found in the nucleus. The protein resides in the cytoplasm. It localises to the perinuclear region. Functionally, essential for biological clock functions. Determines the period length of circadian and ultradian rhythms; an increase in PER dosage leads to shortened circadian rhythms and a decrease leads to lengthened circadian rhythms. Essential for the circadian rhythmicity of locomotor activity, eclosion behavior, and for the rhythmic component of the male courtship song that originates in the thoracic nervous system. The biological cycle depends on the rhythmic formation and nuclear localization of the TIM-PER complex. Light induces the degradation of TIM, which promotes elimination of PER. Nuclear activity of the heterodimer coordinatively regulates PER and TIM transcription through a negative feedback loop. Behaves as a negative element in circadian transcriptional loop. Does not appear to bind DNA, suggesting indirect transcriptional inhibition. This chain is Period circadian protein (per), found in Drosophila virilis (Fruit fly).